The sequence spans 446 residues: C4-dicarboxylate transport protein 2 (446 aa).

10 helical membrane-spanning segments follow: residues 7-26 (PLFG…GIWA), 46-64 (MLIA…CGAG), 77-99 (VIYF…YAFG), 152-171 (ILQV…LLGE), 192-211 (AVVI…FTVG), 221-243 (LGFL…LGGI), 291-313 (VVGL…YLTL), 318-340 (IAQA…VALI), 353-375 (IVIL…VLVL), and 381-403 (IGIA…IAAW).

This sequence belongs to the dicarboxylate/amino acid:cation symporter (DAACS) (TC 2.A.23) family.

It localises to the cell inner membrane. In terms of biological role, responsible for the transport of dicarboxylates such as succinate, fumarate, and malate from the periplasm across the membrane. The chain is C4-dicarboxylate transport protein 2 (dctA2) from Ralstonia nicotianae (strain ATCC BAA-1114 / GMI1000) (Ralstonia solanacearum).